Here is a 558-residue protein sequence, read N- to C-terminus: NAD(P)H-quinone oxidoreductase chain 4 (558 aa).

The next 15 membrane-spanning stretches (helical) occupy residues 25 to 45 (FPWLSLSILFPIVGAFIVPFV), 56 to 76 (WFALGIALTTFLITAAAYLTG), 90 to 110 (VSWLPNLGLTWAVGADGLSMP), 111 to 131 (LILLTSFITALAVLAAWPVTF), 133 to 153 (PKLFFFLILAMDGGQIAVFAV), 157 to 177 (LLFFLAWELELLPVYLLLAIW), 189 to 209 (FILYTAGSSLFILLAALAMGF), 230 to 250 (GFELLCYAGLLIAFGVKLPIV), 264 to 284 (TAPVHMLLAGILLKMGGYALM), 298 to 318 (FAPLLVVLGVVNIIYAALTSF), 327 to 347 (IAYSSISHMGFVLIGIGSFSE), 353 to 373 (AMLQMISHGLIGASLFFLVGA), 397 to 417 (FALWTVCCLASLALPGMSGFV), 438 to 458 (IVIDGLAAIGVILTPIYLLSM), and 485 to 505 (VYIIGCLLVPIIGIGLYPKLM).

The protein belongs to the complex I subunit 4 family.

Its subcellular location is the cellular thylakoid membrane. The enzyme catalyses a plastoquinone + NADH + (n+1) H(+)(in) = a plastoquinol + NAD(+) + n H(+)(out). It carries out the reaction a plastoquinone + NADPH + (n+1) H(+)(in) = a plastoquinol + NADP(+) + n H(+)(out). Functionally, NDH-1 shuttles electrons from NAD(P)H, via FMN and iron-sulfur (Fe-S) centers, to quinones in the respiratory chain. The immediate electron acceptor for the enzyme in this species is believed to be plastoquinone. Couples the redox reaction to proton translocation (for every two electrons transferred, four hydrogen ions are translocated across the cytoplasmic membrane), and thus conserves the redox energy in a proton gradient. This Synechococcus sp. (strain CC9311) protein is NAD(P)H-quinone oxidoreductase chain 4.